A 634-amino-acid polypeptide reads, in one-letter code: Threonine--tRNA ligase (634 aa).

A TGS domain is found at 1-61; sequence MINIRFPDGS…NSNCELRLIT (61 aa). Positions 241-532 are catalytic; sequence DHRKIGKVLD…LIEHYAGNLP (292 aa). 3 residues coordinate Zn(2+): Cys332, His383, and His509.

It belongs to the class-II aminoacyl-tRNA synthetase family. In terms of assembly, homodimer. Zn(2+) is required as a cofactor.

It is found in the cytoplasm. It carries out the reaction tRNA(Thr) + L-threonine + ATP = L-threonyl-tRNA(Thr) + AMP + diphosphate + H(+). Functionally, catalyzes the attachment of threonine to tRNA(Thr) in a two-step reaction: L-threonine is first activated by ATP to form Thr-AMP and then transferred to the acceptor end of tRNA(Thr). Also edits incorrectly charged L-seryl-tRNA(Thr). The sequence is that of Threonine--tRNA ligase from Francisella tularensis subsp. mediasiatica (strain FSC147).